Consider the following 118-residue polypeptide: Large ribosomal subunit protein uL18 (118 aa).

This sequence belongs to the universal ribosomal protein uL18 family. In terms of assembly, part of the 50S ribosomal subunit; part of the 5S rRNA/L5/L18/L25 subcomplex. Contacts the 5S and 23S rRNAs.

In terms of biological role, this is one of the proteins that bind and probably mediate the attachment of the 5S RNA into the large ribosomal subunit, where it forms part of the central protuberance. In Rickettsia peacockii (strain Rustic), this protein is Large ribosomal subunit protein uL18.